We begin with the raw amino-acid sequence, 321 residues long: tRNA-dihydrouridine synthase B (321 aa).

FMN is bound by residues 16–18 (PMA) and Gln-70. The active-site Proton donor is the Cys-100. FMN is bound by residues Lys-139, 200-202 (NGD), and 224-225 (GR).

The protein belongs to the Dus family. DusB subfamily. FMN is required as a cofactor.

The catalysed reaction is a 5,6-dihydrouridine in tRNA + NAD(+) = a uridine in tRNA + NADH + H(+). It carries out the reaction a 5,6-dihydrouridine in tRNA + NADP(+) = a uridine in tRNA + NADPH + H(+). Catalyzes the synthesis of 5,6-dihydrouridine (D), a modified base found in the D-loop of most tRNAs, via the reduction of the C5-C6 double bond in target uridines. The sequence is that of tRNA-dihydrouridine synthase B from Pectobacterium carotovorum (Erwinia carotovora).